Reading from the N-terminus, the 182-residue chain is SAGA-associated factor 11 homolog (182 aa).

Positions 61–84 (GSGAAVEGEPEDSKPYTIVDQPDT) are disordered. The segment at 98–119 (CHCPNCNRIVAASRFAPHLEKC) adopts an SGF11-type zinc-finger fold. The segment at 133–182 (RIANTRDVGTGNYFGGDEDDEDDADWSGEKRKKKISQVRTNGSKKNGKTS) is disordered. A compositionally biased stretch (acidic residues) spans 148–158 (GDEDDEDDADW).

The protein belongs to the SGF11 family. As to quaternary structure, component of some SAGA transcription coactivator-HAT complexes. Within the SAGA complex, participates in a subcomplex of SAGA called the DUB module (deubiquitination module).

The protein localises to the nucleus. Its function is as follows. Component of the transcription regulatory histone acetylation (HAT) complex SAGA, a multiprotein complex that activates transcription by remodeling chromatin and mediating histone acetylation and deubiquitination. Within the SAGA complex, participates in a subcomplex that specifically deubiquitinates histone H2B. The SAGA complex is recruited to specific gene promoters by activators, where it is required for transcription. The polypeptide is SAGA-associated factor 11 homolog (Anopheles gambiae (African malaria mosquito)).